Reading from the N-terminus, the 570-residue chain is Putative ABC transporter ATP-binding protein SACOL2708 (570 aa).

ABC transporter domains are found at residues 6–247 (ISFK…GIRE) and 304–537 (LELN…ASLR). Residues 40 to 47 (GASGSGKS) and 338 to 345 (GHNGAGKS) contribute to the ATP site.

It belongs to the ABC transporter superfamily.

The protein localises to the cell membrane. Functionally, probably part of an ABC transporter complex. Responsible for energy coupling to the transport system. This Staphylococcus aureus (strain COL) protein is Putative ABC transporter ATP-binding protein SACOL2708.